Here is a 912-residue protein sequence, read N- to C-terminus: Nitrate reductase [NADH] (912 aa).

Residues S1–W99 are disordered. A compositionally biased stretch (low complexity) spans A13–P23. A compositionally biased stretch (acidic residues) spans A54 to H68. Residues P85–G94 show a composition bias toward basic and acidic residues. C186 serves as a coordination point for Mo-molybdopterin. Residues D535–I610 form the Cytochrome b5 heme-binding domain. H570 and H593 together coordinate heme. An FAD-binding FR-type domain is found at R651–T764. FAD contacts are provided by residues R703–T706, L720–Y724, F725, F732, L737–T739, S788, and T791.

It belongs to the nitrate reductase family. In terms of assembly, homodimer. FAD serves as cofactor. Heme is required as a cofactor. The cofactor is Mo-molybdopterin.

The catalysed reaction is nitrite + NAD(+) + H2O = nitrate + NADH + H(+). In terms of biological role, nitrate reductase is a key enzyme involved in the first step of nitrate assimilation in plants, fungi and bacteria. The protein is Nitrate reductase [NADH] of Hordeum vulgare (Barley).